The primary structure comprises 329 residues: MQGSVTEFLKPRLVDIEQVSSTHAKVTLEPLERGFGHTLGNALRRILLSSMPGCAVTEVEIDGVLHEYSTKEGVQEDILEILLNLKGLAVKVQGKDDVILTLNKSGIGPVTAADITHDGDVEIVKPQHVLCHLTDENAAISMRIKVQRGRGYVPASARIHSEEYERPIGRLLVDACYSPVERIAYNVEAARVEQRTDLDKLVIEMETNGTIDPEEAIRRAATILAEQLEAFVDLRDVRQPEVKEEKPEFDPILLRPVDDLELTVRSANCLKAEAIHYIGDLVQRTEVELLKTPNLGKKSLTEIKDVLASRGLSLGMRLENWPPASIADE.

Positions 1 to 235 (MQGSVTEFLK…EQLEAFVDLR (235 aa)) are alpha N-terminal domain (alpha-NTD). The alpha C-terminal domain (alpha-CTD) stretch occupies residues 249-329 (FDPILLRPVD…NWPPASIADE (81 aa)).

Belongs to the RNA polymerase alpha chain family. In terms of assembly, homodimer. The RNAP catalytic core consists of 2 alpha, 1 beta, 1 beta' and 1 omega subunit. When a sigma factor is associated with the core the holoenzyme is formed, which can initiate transcription.

It carries out the reaction RNA(n) + a ribonucleoside 5'-triphosphate = RNA(n+1) + diphosphate. Its function is as follows. DNA-dependent RNA polymerase catalyzes the transcription of DNA into RNA using the four ribonucleoside triphosphates as substrates. The chain is DNA-directed RNA polymerase subunit alpha from Sodalis glossinidius (strain morsitans).